The sequence spans 178 residues: Cytidylate kinase 2 (178 aa).

7–15 contributes to the ATP binding site; it reads GKSGCGNTT.

The protein belongs to the cytidylate kinase family. Type 2 subfamily.

It is found in the cytoplasm. It carries out the reaction CMP + ATP = CDP + ADP. It catalyses the reaction dCMP + ATP = dCDP + ADP. In Borreliella afzelii (strain PKo) (Borrelia afzelii), this protein is Cytidylate kinase 2.